The sequence spans 105 residues: Endogenous retrovirus group K member 8 Rec protein (105 aa).

Residues 1–48 (MNPSEMQRKAPPRRRRHRNRAPLTHKMNKMVTSEEQMKLPSTKKAEPP) are disordered. Over residues 10 to 20 (APPRRRRHRNR) the composition is skewed to basic residues. Residues 13–20 (RRRRHRNR) carry the Nuclear localization signal motif. Residues 50–59 (WAQLKKLTQL) carry the Nuclear export signal motif.

In terms of assembly, forms homodimers, homotrimers, and homotetramers via a C-terminal domain. Associates with XPO1 and with ZNF145.

It is found in the cytoplasm. The protein resides in the nucleus. Its subcellular location is the nucleolus. In terms of biological role, retroviral replication requires the nuclear export and translation of unspliced, singly-spliced and multiply-spliced derivatives of the initial genomic transcript. Rec interacts with a highly structured RNA element (RcRE) present in the viral 3'LTR and recruits the cellular nuclear export machinery. This permits export to the cytoplasm of unspliced genomic or incompletely spliced subgenomic viral transcripts. The chain is Endogenous retrovirus group K member 8 Rec protein (ERVK-8) from Homo sapiens (Human).